The sequence spans 593 residues: NADH-quinone oxidoreductase subunit C/D (593 aa).

Positions 1–184 are NADH dehydrogenase I subunit C; sequence MTADNAIFIP…DPYSLTLAKQ (184 aa). The NADH dehydrogenase I subunit D stretch occupies residues 208–593; it reads DYMFLNLGPN…IDFVMADVDR (386 aa).

The protein in the N-terminal section; belongs to the complex I 30 kDa subunit family. This sequence in the C-terminal section; belongs to the complex I 49 kDa subunit family. NDH-1 is composed of 13 different subunits. Subunits NuoB, CD, E, F, and G constitute the peripheral sector of the complex.

The protein localises to the cell inner membrane. The catalysed reaction is a quinone + NADH + 5 H(+)(in) = a quinol + NAD(+) + 4 H(+)(out). Its function is as follows. NDH-1 shuttles electrons from NADH, via FMN and iron-sulfur (Fe-S) centers, to quinones in the respiratory chain. The immediate electron acceptor for the enzyme in this species is believed to be ubiquinone. Couples the redox reaction to proton translocation (for every two electrons transferred, four hydrogen ions are translocated across the cytoplasmic membrane), and thus conserves the redox energy in a proton gradient. This is NADH-quinone oxidoreductase subunit C/D from Pseudomonas putida (strain GB-1).